The primary structure comprises 630 residues: Angiotensin-converting enzyme-related protein (630 aa).

Positions 1-22 (MGACNITVLLLVIMLWLPHGLS) are cleaved as a signal peptide. Residues 28–615 (SASVLEARRF…SRLGVPLGWG (588 aa)) enclose the Peptidase M2 domain. Disulfide bonds link C142-C150 and C344-C362. H375 is a binding site for Zn(2+). E376 serves as the catalytic Proton acceptor. 2 residues coordinate Zn(2+): H379 and E403. The active-site Proton donor is H505. C530 and C548 are disulfide-bonded.

The protein belongs to the peptidase M2 family. Zn(2+) is required as a cofactor. Glycosylated.

The protein resides in the secreted. It is found in the extracellular space. It carries out the reaction Release of a C-terminal dipeptide, oligopeptide-|-Xaa-Yaa, when Xaa is not Pro, and Yaa is neither Asp nor Glu. Thus, conversion of angiotensin I to angiotensin II, with increase in vasoconstrictor activity, but no action on angiotensin II.. With respect to regulation, inhibited by captopril, lisinopril, trandolaprilat, fosinoprilat and enalaprilat. May be involved in the specific maturation or degradation of a number of bioactive peptides. May have a role in the specification of heart progenitors. The protein is Angiotensin-converting enzyme-related protein (Acer) of Drosophila melanogaster (Fruit fly).